The following is a 148-amino-acid chain: Deoxyuridine 5'-triphosphate nucleotidohydrolase (148 aa).

Substrate-binding positions include 65–67, N78, 82–84, and K92; these read RSG and TID.

It belongs to the dUTPase family. It depends on Mg(2+) as a cofactor.

It catalyses the reaction dUTP + H2O = dUMP + diphosphate + H(+). It participates in pyrimidine metabolism; dUMP biosynthesis; dUMP from dCTP (dUTP route): step 2/2. In terms of biological role, this enzyme is involved in nucleotide metabolism: it produces dUMP, the immediate precursor of thymidine nucleotides and it decreases the intracellular concentration of dUTP so that uracil cannot be incorporated into DNA. The protein is Deoxyuridine 5'-triphosphate nucleotidohydrolase of Chlorobium phaeovibrioides (strain DSM 265 / 1930) (Prosthecochloris vibrioformis (strain DSM 265)).